The primary structure comprises 219 residues: MSNQKALVIFSGGQDSTTCLIQAIQTYGRENVQAITFRYGQRHAVELERAEWIAQDLGVSQTVLDLSLMRQITHNALMDETAAIETADNGVPNTFVDGRNALFLLYAAIFAKGQGIRHIIAGVCETDFSGYPDCRGVFVKSMNVTLNLAMDYDFQIHTPLMYLTKAQTWALADEMGVLDYIREQTHTCYKGIVGGCRECPSCILRERGLAECLESKKAV.

Phe10–Leu20 contacts ATP. Residues Cys188, Cys196, Cys199, and Cys202 each coordinate Zn(2+).

Belongs to the QueC family. Zn(2+) serves as cofactor.

The enzyme catalyses 7-carboxy-7-deazaguanine + NH4(+) + ATP = 7-cyano-7-deazaguanine + ADP + phosphate + H2O + H(+). Its pathway is purine metabolism; 7-cyano-7-deazaguanine biosynthesis. In terms of biological role, catalyzes the ATP-dependent conversion of 7-carboxy-7-deazaguanine (CDG) to 7-cyano-7-deazaguanine (preQ(0)). The protein is 7-cyano-7-deazaguanine synthase of Neisseria gonorrhoeae (strain NCCP11945).